Here is a 476-residue protein sequence, read N- to C-terminus: Protein DETOXIFICATION 3 (476 aa).

12 helical membrane-spanning segments follow: residues 35-55, 66-86, 117-137, 146-166, 185-205, 208-228, 260-280, 289-309, 331-351, 370-390, 402-422, and 433-453; these read AAPM…SVMV, GVAL…FGLA, IPIC…LISL, VAGS…FFIP, LTTL…FGLG, GAAM…SCYV, AAMV…SGLL, VLSI…GVAA, VLAG…LLFT, VANL…TAVL, IGAL…GVYL, and LWCG…FVTA.

The protein belongs to the multi antimicrobial extrusion (MATE) (TC 2.A.66.1) family.

It is found in the membrane. This chain is Protein DETOXIFICATION 3, found in Arabidopsis thaliana (Mouse-ear cress).